The primary structure comprises 351 residues: Glycerol-1-phosphate dehydrogenase [NAD(P)+] (351 aa).

NAD(+) contacts are provided by residues 97–101 and 119–122; these read GKVID and TSPS. Residue aspartate 124 participates in substrate binding. Serine 128 is a binding site for NAD(+). Aspartate 171 is a binding site for substrate. Residues aspartate 171 and histidine 251 each contribute to the Zn(2+) site. Histidine 255 provides a ligand contact to substrate. Residue histidine 267 coordinates Zn(2+).

It belongs to the glycerol-1-phosphate dehydrogenase family. As to quaternary structure, homodimer. Requires Zn(2+) as cofactor.

It localises to the cytoplasm. The catalysed reaction is sn-glycerol 1-phosphate + NAD(+) = dihydroxyacetone phosphate + NADH + H(+). The enzyme catalyses sn-glycerol 1-phosphate + NADP(+) = dihydroxyacetone phosphate + NADPH + H(+). The protein operates within membrane lipid metabolism; glycerophospholipid metabolism. Functionally, catalyzes the NAD(P)H-dependent reduction of dihydroxyacetonephosphate (DHAP or glycerone phosphate) to glycerol 1-phosphate (G1P). The G1P thus generated is used as the glycerophosphate backbone of phospholipids in the cellular membranes of Archaea. The chain is Glycerol-1-phosphate dehydrogenase [NAD(P)+] from Saccharolobus islandicus (strain M.16.27) (Sulfolobus islandicus).